The following is a 248-amino-acid chain: MDVKIDGPLYSGKAKDVLLTDDPEIVAVRFRDDITAGDGEKKDTLEMKGYYNSVISAKIFEVLEEAGVPTQYLELREPGCILARKLEMIPIEVITRNIAAGSIVRRFPFTEGQEFVPPLIQMDYKSDEHGDPMLNDDIILALGIATRDELEEIRRITLHINSVLRDFLKSRGLILPDFKLEFGRDSSGRIRLGDEVSPDTCRLWDMETGEPLDKDIFRRGEEGVVGAYRRVARMILDDEDIERWNVEL.

It belongs to the SAICAR synthetase family.

The enzyme catalyses 5-amino-1-(5-phospho-D-ribosyl)imidazole-4-carboxylate + L-aspartate + ATP = (2S)-2-[5-amino-1-(5-phospho-beta-D-ribosyl)imidazole-4-carboxamido]succinate + ADP + phosphate + 2 H(+). The protein operates within purine metabolism; IMP biosynthesis via de novo pathway; 5-amino-1-(5-phospho-D-ribosyl)imidazole-4-carboxamide from 5-amino-1-(5-phospho-D-ribosyl)imidazole-4-carboxylate: step 1/2. This chain is Phosphoribosylaminoimidazole-succinocarboxamide synthase (purC), found in Methanothermobacter thermautotrophicus (strain ATCC 29096 / DSM 1053 / JCM 10044 / NBRC 100330 / Delta H) (Methanobacterium thermoautotrophicum).